Here is a 1012-residue protein sequence, read N- to C-terminus: Ubiquitin-like modifier-activating enzyme 7 (1012 aa).

Residues 23–159 (GSPAMQRIQG…DTRGLVGQLF (137 aa)) form a 1-1 repeat. The interval 23–575 (GSPAMQRIQG…GTWGSATVFM (553 aa)) is 2 approximate repeats. Ser-266 is subject to Phosphoserine. A 1-2 repeat occupies 423-575 (GAGFQEKLRR…GTWGSATVFM (153 aa)). 442 to 471 (AIGCELLKVFALVGLGAGNSGGLTVVDMDH) lines the ATP pocket. Catalysis depends on Cys-599, which acts as the Glycyl thioester intermediate.

Belongs to the ubiquitin-activating E1 family. As to quaternary structure, (Microbial infection) Interacts with human cytomegalovirus proteins NEC2/UL50 and UL26; these interactions inhibit ISGylation and cause proteasomal degradation of UBA7. (Microbial infection) Interacts with rotavirus non-structural protein 5 (NSP5); this interaction promotes UBA7 proteasomal degradation. In terms of assembly, monomer. Binds and is involved in the conjugation of G1P2/ISG15. Post-translationally, ISGylated. In terms of processing, ubiquitinated by RNF170. Expressed in a variety of normal and tumor cell types, but is reduced in lung cancer cell lines.

The protein localises to the cytoplasm. The protein resides in the nucleus. The protein operates within protein modification; protein ubiquitination. Its function is as follows. E1-activating enzyme that catalyzes the covalent conjugation of the ubiquitin-like protein product of ISG15 to additional interferon stimulated proteins (ISGs) as well as other cellular proteins such as P53 in a process termed protein ISGylation. Plays an essential role in antiviral immunity together with ISG15 by restricting the replication of many viruses including rabies virus, influenza virus, sindbis virus, rotavirus or human cytomegalovirus. For example, ISG15 modification of influenza A protein NS1 disrupts the association of the NS1 with importin-alpha leading to NS1 nuclear import inhibition. ISGylation of human cytomegalovirs protein UL26 regulates its stability and inhibits its activities to suppress NF-kappa-B signaling. The chain is Ubiquitin-like modifier-activating enzyme 7 from Homo sapiens (Human).